We begin with the raw amino-acid sequence, 244 residues long: Tyrosine recombinase XerD-like (244 aa).

Positions methionine 1–tyrosine 73 constitute a Core-binding (CB) domain. One can recognise a Tyr recombinase domain in the interval alanine 90–arginine 244. Active-site residues include lysine 150 and arginine 211. The active-site O-(3'-phospho-DNA)-tyrosine intermediate is the tyrosine 243.

Belongs to the 'phage' integrase family. XerD-like subfamily.

It localises to the cytoplasm. Putative tyrosine recombinase. Not involved in the cutting and rejoining of the recombining DNA molecules on dif(SL) site. The polypeptide is Tyrosine recombinase XerD-like (Streptococcus pneumoniae serotype 2 (strain D39 / NCTC 7466)).